The following is a 209-amino-acid chain: MNLKDRRLKKIMEVLSLIFTFEIVASFILSTYNPPYQDLLIKLDYISIMFFTFEFIYNFYYVEDKAKFFKDIYNIVDAIVVIAFLLYSLQVFYSKAFLGLRVINLLRILVLLRIIKLRKLEENQALINFLTLLTICFIASCLIWIVESGVNPAINNFFDAFYFTTISITTVGYGDITPKTDAGKLIIIFSVLFFISGLITSLQKALKGD.

The Cytoplasmic segment spans residues 1 to 10; sequence MNLKDRRLKK. A helical transmembrane segment spans residues 11–31; it reads IMEVLSLIFTFEIVASFILST. Residues 32–38 lie on the Extracellular side of the membrane; that stretch reads YNPPYQD. Residues 39 to 59 form a helical membrane-spanning segment; sequence LLIKLDYISIMFFTFEFIYNF. The Cytoplasmic portion of the chain corresponds to 60 to 71; it reads YYVEDKAKFFKD. A helical transmembrane segment spans residues 72–92; the sequence is IYNIVDAIVVIAFLLYSLQVF. The Extracellular segment spans residues 93-96; sequence YSKA. Residues 97–117 traverse the membrane as a helical; Voltage-sensor segment; it reads FLGLRVINLLRILVLLRIIKL. Over 118–125 the chain is Cytoplasmic; that stretch reads RKLEENQA. A helical membrane pass occupies residues 126–146; it reads LINFLTLLTICFIASCLIWIV. Residues 147 to 181 lie on the Extracellular side of the membrane; sequence ESGVNPAINNFFDAFYFTTISITTVGYGDITPKTD. A Selectivity filter motif is present at residues 170 to 175; that stretch reads TVGYGD. A helical membrane pass occupies residues 182-202; that stretch reads AGKLIIIFSVLFFISGLITSL. The Cytoplasmic portion of the chain corresponds to 203-209; it reads QKALKGD.

Belongs to the potassium channel family. As to quaternary structure, homotetramer.

The protein resides in the cell membrane. Its function is as follows. Voltage-gated potassium-selective channel opened by hyperpolarization. This is Hyperpolarization-activated voltage-gated potassium channel (mvp) from Methanocaldococcus jannaschii (strain ATCC 43067 / DSM 2661 / JAL-1 / JCM 10045 / NBRC 100440) (Methanococcus jannaschii).